A 355-amino-acid polypeptide reads, in one-letter code: Anthranilate phosphoribosyltransferase (355 aa).

5-phospho-alpha-D-ribose 1-diphosphate is bound by residues Gly-102, 105 to 106, Ser-110, 112 to 115, 130 to 138, and Ser-142; these read GD, NIST, and KHGNRSVSS. Position 102 (Gly-102) interacts with anthranilate. Position 114 (Ser-114) interacts with Mg(2+). Anthranilate is bound at residue Asn-133. Arg-188 contacts anthranilate. Mg(2+)-binding residues include Asp-246 and Glu-247.

The protein belongs to the anthranilate phosphoribosyltransferase family. In terms of assembly, homodimer. It depends on Mg(2+) as a cofactor.

It catalyses the reaction N-(5-phospho-beta-D-ribosyl)anthranilate + diphosphate = 5-phospho-alpha-D-ribose 1-diphosphate + anthranilate. The protein operates within amino-acid biosynthesis; L-tryptophan biosynthesis; L-tryptophan from chorismate: step 2/5. Functionally, catalyzes the transfer of the phosphoribosyl group of 5-phosphorylribose-1-pyrophosphate (PRPP) to anthranilate to yield N-(5'-phosphoribosyl)-anthranilate (PRA). This is Anthranilate phosphoribosyltransferase from Pectobacterium carotovorum subsp. carotovorum (strain PC1).